A 158-amino-acid polypeptide reads, in one-letter code: Cyclic pyranopterin monophosphate synthase (158 aa).

Residues 75–77 and 113–114 each bind substrate; these read LCH and ME. Asp128 is an active-site residue.

It belongs to the MoaC family. In terms of assembly, homohexamer; trimer of dimers.

The catalysed reaction is (8S)-3',8-cyclo-7,8-dihydroguanosine 5'-triphosphate = cyclic pyranopterin phosphate + diphosphate. It participates in cofactor biosynthesis; molybdopterin biosynthesis. Its function is as follows. Catalyzes the conversion of (8S)-3',8-cyclo-7,8-dihydroguanosine 5'-triphosphate to cyclic pyranopterin monophosphate (cPMP). The polypeptide is Cyclic pyranopterin monophosphate synthase (Paraburkholderia xenovorans (strain LB400)).